The primary structure comprises 238 residues: Isoprene-epoxide--glutathione S-transferase (238 aa).

The GST N-terminal domain maps to Y7 to L82. Residues D118 to I238 enclose the GST C-terminal domain.

It belongs to the GST superfamily. In terms of assembly, homodimer.

The catalysed reaction is 2-glutathionyl-2-methylbut-3-en-1-ol = (3R)-3,4-epoxy-3-methylbut-1-ene + glutathione. Its activity is regulated as follows. Activity is inhibited by 1,2-epoxyhexane. In terms of biological role, involved in isoprene degradation. Catalyzes the glutathione-dependent ring opening of various epoxides. The highest conversion rate is observed with the physiological substrate, 3,4-epoxy-3-methyl-1-butene, which is the primary oxidation product of isoprene. It can also use other epoxides, including epoxyethane, epoxypropane, epithiopropane, epichlorohydrin, epifluorohydrin, epibromohydrin, 1,2-epoxybutane, 1,2-epoxyhexane, cis-2,3-epoxybutane, cis-1,2-dichloroepoxyethane and trans-1,2-dichloroepoxyethane. In Rhodococcus sp. (strain AD45), this protein is Isoprene-epoxide--glutathione S-transferase.